Reading from the N-terminus, the 142-residue chain is Large ribosomal subunit protein uL13 (142 aa).

The protein belongs to the universal ribosomal protein uL13 family. In terms of assembly, part of the 50S ribosomal subunit.

This protein is one of the early assembly proteins of the 50S ribosomal subunit, although it is not seen to bind rRNA by itself. It is important during the early stages of 50S assembly. In Treponema denticola (strain ATCC 35405 / DSM 14222 / CIP 103919 / JCM 8153 / KCTC 15104), this protein is Large ribosomal subunit protein uL13.